A 204-amino-acid chain; its full sequence is Imidazoleglycerol-phosphate dehydratase (204 aa).

It belongs to the imidazoleglycerol-phosphate dehydratase family.

Its subcellular location is the cytoplasm. The catalysed reaction is D-erythro-1-(imidazol-4-yl)glycerol 3-phosphate = 3-(imidazol-4-yl)-2-oxopropyl phosphate + H2O. The protein operates within amino-acid biosynthesis; L-histidine biosynthesis; L-histidine from 5-phospho-alpha-D-ribose 1-diphosphate: step 6/9. This is Imidazoleglycerol-phosphate dehydratase from Corynebacterium jeikeium (strain K411).